The chain runs to 69 residues: MKNFVIFLIRLYQKYISPMKPRTCRFYPTCSQYSIEAISKYGLLKGGLMSIWRILRCNPFNPGGYDPVK.

Belongs to the UPF0161 family.

It is found in the cell membrane. Could be involved in insertion of integral membrane proteins into the membrane. The protein is Putative membrane protein insertion efficiency factor of Caldanaerobacter subterraneus subsp. tengcongensis (strain DSM 15242 / JCM 11007 / NBRC 100824 / MB4) (Thermoanaerobacter tengcongensis).